The chain runs to 288 residues: Oxaloacetate decarboxylase (288 aa).

Ser-47 is a substrate binding site. Asp-85 serves as a coordination point for Mg(2+). Substrate is bound by residues Arg-156 and His-232.

The protein belongs to the isocitrate lyase/PEP mutase superfamily. Oxaloacetate decarboxylase family. Homotetramer; dimer of dimers. Mg(2+) is required as a cofactor.

The enzyme catalyses oxaloacetate + H(+) = pyruvate + CO2. In terms of biological role, catalyzes the decarboxylation of oxaloacetate into pyruvate. Seems to play a role in maintaining cellular concentrations of bicarbonate and pyruvate. The sequence is that of Oxaloacetate decarboxylase from Bradyrhizobium sp. (strain BTAi1 / ATCC BAA-1182).